The following is a 392-amino-acid chain: ATP phosphoribosyltransferase regulatory subunit (392 aa).

Belongs to the class-II aminoacyl-tRNA synthetase family. HisZ subfamily. As to quaternary structure, heteromultimer composed of HisG and HisZ subunits.

The protein localises to the cytoplasm. It functions in the pathway amino-acid biosynthesis; L-histidine biosynthesis; L-histidine from 5-phospho-alpha-D-ribose 1-diphosphate: step 1/9. Its function is as follows. Required for the first step of histidine biosynthesis. May allow the feedback regulation of ATP phosphoribosyltransferase activity by histidine. In Marinomonas sp. (strain MWYL1), this protein is ATP phosphoribosyltransferase regulatory subunit.